Here is a 281-residue protein sequence, read N- to C-terminus: 2-dehydro-3-deoxyphosphooctonate aldolase (281 aa).

It belongs to the KdsA family.

Its subcellular location is the cytoplasm. The catalysed reaction is D-arabinose 5-phosphate + phosphoenolpyruvate + H2O = 3-deoxy-alpha-D-manno-2-octulosonate-8-phosphate + phosphate. The protein operates within carbohydrate biosynthesis; 3-deoxy-D-manno-octulosonate biosynthesis; 3-deoxy-D-manno-octulosonate from D-ribulose 5-phosphate: step 2/3. Its pathway is bacterial outer membrane biogenesis; lipopolysaccharide biosynthesis. The chain is 2-dehydro-3-deoxyphosphooctonate aldolase from Psychromonas ingrahamii (strain DSM 17664 / CCUG 51855 / 37).